The primary structure comprises 270 residues: tRNA pseudouridine synthase A (270 aa).

Residue Asp-60 is the Nucleophile of the active site. The interval 107–111 (FHARF) is RNA binding. Position 118 (Tyr-118) interacts with substrate. Residues 168–172 (QCQSR) form an interaction with tRNA region.

Belongs to the tRNA pseudouridine synthase TruA family. As to quaternary structure, homodimer.

The enzyme catalyses uridine(38/39/40) in tRNA = pseudouridine(38/39/40) in tRNA. Its function is as follows. Formation of pseudouridine at positions 38, 39 and 40 in the anticodon stem and loop of transfer RNAs. The protein is tRNA pseudouridine synthase A of Enterobacter sp. (strain 638).